A 502-amino-acid chain; its full sequence is Arabinose import ATP-binding protein AraG (502 aa).

2 consecutive ABC transporter domains span residues 5-240 and 253-496; these read LEFS…MVGR and LGGI…LPDK. 37–44 is a binding site for ATP; it reads GENGAGKS.

It belongs to the ABC transporter superfamily. Arabinose importer (TC 3.A.1.2.2) family. As to quaternary structure, the complex is composed of two ATP-binding proteins (AraG), two transmembrane proteins (AraH) and a solute-binding protein (AraF).

It is found in the cell inner membrane. It carries out the reaction L-arabinose(out) + ATP + H2O = L-arabinose(in) + ADP + phosphate + H(+). In terms of biological role, part of the ABC transporter complex AraFGH involved in arabinose import. Responsible for energy coupling to the transport system. The sequence is that of Arabinose import ATP-binding protein AraG from Rhizobium johnstonii (strain DSM 114642 / LMG 32736 / 3841) (Rhizobium leguminosarum bv. viciae).